Consider the following 943-residue polypeptide: Leucine--tRNA ligase (943 aa).

A 'HIGH' region motif is present at residues 36-46 (PYPSGSMHVGH). The 'KMSKS' region signature appears at 623–627 (KMSSS). The interval 910-943 (ASEVVIHTDPEEAPGPEDRKAGARPLRPGIWLEE) is disordered. Residues 915–930 (IHTDPEEAPGPEDRKA) show a composition bias toward basic and acidic residues.

Belongs to the class-I aminoacyl-tRNA synthetase family.

It localises to the cytoplasm. It carries out the reaction tRNA(Leu) + L-leucine + ATP = L-leucyl-tRNA(Leu) + AMP + diphosphate. This is Leucine--tRNA ligase from Methanopyrus kandleri (strain AV19 / DSM 6324 / JCM 9639 / NBRC 100938).